The primary structure comprises 244 residues: Carbonyl reductase [NADPH] 2 (244 aa).

Residue 11-39 (LVTGAGKGIGRDTVKALHASGAKVVAVTR) participates in NADP(+) binding. Serine 42 carries the phosphoserine modification. Residue serine 136 coordinates substrate. Catalysis depends on tyrosine 149, which acts as the Proton acceptor. A Phosphoserine modification is found at serine 176.

It belongs to the short-chain dehydrogenases/reductases (SDR) family. As to quaternary structure, homotetramer. In terms of tissue distribution, predominantly expressed in lung, in ciliated cells, non-ciliated bronchiolar cells and type-II alveolar pneumocytes. Also detected in adipose tissue (at protein level). Low expression in testis, heart, kidney, spleen, brain and liver.

The protein resides in the mitochondrion matrix. The catalysed reaction is a secondary alcohol + NADP(+) = a ketone + NADPH + H(+). Its function is as follows. May function in the pulmonary metabolism of endogenous carbonyl compounds, such as aliphatic aldehydes and ketones derived from lipid peroxidation, 3-ketosteroids and fatty aldehydes, as well as in xenobiotic metabolism. The polypeptide is Carbonyl reductase [NADPH] 2 (Cbr2) (Mus musculus (Mouse)).